The sequence spans 587 residues: Integrator complex subunit 14 (587 aa).

Residues 3–113 (TLIALDASLS…NILQVVVFTD (111 aa)) form the VWFA domain. 2 disordered regions span residues 190 to 211 (KSSD…KSEL) and 304 to 331 (REKS…DTSN).

It belongs to the Integrator subunit 14 family. In terms of assembly, belongs to the multiprotein complex Integrator, at least composed of IntS1, IntS2, IntS3, IntS4, omd/IntS5, IntS6, defl/IntS7, IntS8, IntS9, IntS10, IntS11, IntS12, asun/IntS13, IntS14 and IntS15. The core complex associates with protein phosphatase 2A subunits mts/PP2A and Pp2A-29B, to form the Integrator-PP2A (INTAC) complex.

Its subcellular location is the nucleus. Its function is as follows. Component of the integrator complex, a multiprotein complex that terminates RNA polymerase II (Pol II) transcription in the promoter-proximal region of genes. The integrator complex provides a quality checkpoint during transcription elongation by driving premature transcription termination of transcripts that are unfavorably configured for transcriptional elongation: the complex terminates transcription by (1) catalyzing dephosphorylation of the C-terminal domain (CTD) of Pol II subunit Polr2A/Rbp1 and Spt5, and (2) degrading the exiting nascent RNA transcript via endonuclease activity. The integrator complex is also involved in the 3'-end processing of the U7 snRNA, and also the spliceosomal snRNAs U1, U2, U4 and U5. The polypeptide is Integrator complex subunit 14 (Drosophila melanogaster (Fruit fly)).